The following is a 191-amino-acid chain: NADH-quinone oxidoreductase subunit B (191 aa).

Residues cysteine 52, cysteine 53, cysteine 118, and cysteine 148 each coordinate [4Fe-4S] cluster.

The protein belongs to the complex I 20 kDa subunit family. As to quaternary structure, NDH-1 is composed of 14 different subunits. Subunits NuoB, C, D, E, F, and G constitute the peripheral sector of the complex. It depends on [4Fe-4S] cluster as a cofactor.

It localises to the cell inner membrane. The enzyme catalyses a quinone + NADH + 5 H(+)(in) = a quinol + NAD(+) + 4 H(+)(out). Its function is as follows. NDH-1 shuttles electrons from NADH, via FMN and iron-sulfur (Fe-S) centers, to quinones in the respiratory chain. The immediate electron acceptor for the enzyme in this species is believed to be a menaquinone. Couples the redox reaction to proton translocation (for every two electrons transferred, four hydrogen ions are translocated across the cytoplasmic membrane), and thus conserves the redox energy in a proton gradient. This Azobacteroides pseudotrichonymphae genomovar. CFP2 protein is NADH-quinone oxidoreductase subunit B.